A 343-amino-acid chain; its full sequence is SET and MYND domain-containing protein DDB_G0292454 (343 aa).

An SET domain is found at 77 to 307 (EPFISYPSII…PGDEITISYT (231 aa)). C93, C96, C111, C114, C120, C124, H133, and C137 together coordinate Zn(2+). Residues 93–137 (CNHCLKEIKKEEEEIKQECEECKVYKYCSIECKEKSSIEYHSVLC) form an MYND-type zinc finger.

The protein belongs to the class V-like SAM-binding methyltransferase superfamily.

In terms of biological role, probable methyltransferase. This is SET and MYND domain-containing protein DDB_G0292454 from Dictyostelium discoideum (Social amoeba).